Here is a 37-residue protein sequence, read N- to C-terminus: uncharacterized protein (37 aa).

This is an uncharacterized protein from Archaeoglobus fulgidus (strain ATCC 49558 / DSM 4304 / JCM 9628 / NBRC 100126 / VC-16).